Reading from the N-terminus, the 522-residue chain is Serine/threonine-protein kinase pak-2 (522 aa).

Residues 16 to 29 (ISTPSNFEHRIHAG) enclose the CRIB domain. Over residues 183-204 (TTTPQLQPKSPSTPQAMRQQPK) the composition is skewed to polar residues. A disordered region spans residues 183 to 208 (TTTPQLQPKSPSTPQAMRQQPKCTEG). The region spanning 231 to 482 (LTDYKQIGEG…AKDLLRHPFF (252 aa)) is the Protein kinase domain. ATP-binding positions include 237–245 (IGEGSTGVV) and Lys-260. Asp-350 serves as the catalytic Proton acceptor.

It belongs to the protein kinase superfamily. STE Ser/Thr protein kinase family. STE20 subfamily. It depends on Mg(2+) as a cofactor. Mn(2+) serves as cofactor. As to expression, expressed in pharynx, vulva and spermatheca. Unlike other p21-activated kinases, expression is not detected in neurons.

The catalysed reaction is L-seryl-[protein] + ATP = O-phospho-L-seryl-[protein] + ADP + H(+). The enzyme catalyses L-threonyl-[protein] + ATP = O-phospho-L-threonyl-[protein] + ADP + H(+). Functionally, serine/threonine-protein kinase which plays a redundant role with pak-1 in embryogenesis but, in contrast to pak-1, is not involved in commissural axon guidance of ventral cord motoneurons or in distal tip cell (DTC) migration. The sequence is that of Serine/threonine-protein kinase pak-2 from Caenorhabditis elegans.